We begin with the raw amino-acid sequence, 117 residues long: MKVPAPYAWNSDFATTYENIDSEHRTLFNGLFALAEFNTLTQLNAAIEVFTLHFHDEQGQMIRSNYVNTKEHTDIHNGFMDVMRGWRSPVPQQDLLAGMAWLANHIPTEDFKYKGKL.

Fe cation is bound by residues histidine 24, histidine 53, glutamate 57, histidine 72, histidine 76, histidine 105, and aspartate 110.

Belongs to the hemerythrin family. In terms of assembly, octamer composed of two types of chains: alpha and beta.

Hemerythrin is a respiratory protein in blood cells of certain marine worms. The oxygen-binding site in each chain contains two iron atoms. This Lingula reevii (Inarticulated brachiopod) protein is Hemerythrin subunit beta.